The primary structure comprises 301 residues: t-SNARE affecting a late Golgi compartment protein 2 (301 aa).

The Cytoplasmic portion of the chain corresponds to 1–279 (MAYRDRTGLY…SHQKNTGRLR (279 aa)). Residues 92 to 120 (SDKTEQENEIQRLTIQITQDFQRCQKLLQ) adopt a coiled-coil conformation. The 63-residue stretch at 206–268 (DEQAIRHERA…KSAEKELIKA (63 aa)) folds into the t-SNARE coiled-coil homology domain. A helical; Anchor for type IV membrane protein transmembrane segment spans residues 280–300 (FICFLILLIVALIVILAIKLL). Arg-301 is a topological domain (vesicular).

This sequence belongs to the syntaxin family.

It is found in the golgi apparatus. Its subcellular location is the trans-Golgi network membrane. The protein resides in the endosome membrane. Its function is as follows. t-SNARE that functions in transport from the endosome to the late Golgi and on the endocytic pathway. This chain is t-SNARE affecting a late Golgi compartment protein 2 (tlg2), found in Schizosaccharomyces pombe (strain 972 / ATCC 24843) (Fission yeast).